A 177-amino-acid polypeptide reads, in one-letter code: Transcription termination/antitermination protein NusG (177 aa).

Residues 125–150 (EGENVRITEGPFANFTAIVEEYDMVR) form the KOW domain.

Belongs to the NusG family.

Functionally, participates in transcription elongation, termination and antitermination. This Campylobacter jejuni subsp. jejuni serotype O:2 (strain ATCC 700819 / NCTC 11168) protein is Transcription termination/antitermination protein NusG.